A 428-amino-acid polypeptide reads, in one-letter code: Histidine--tRNA ligase (428 aa).

Belongs to the class-II aminoacyl-tRNA synthetase family. In terms of assembly, homodimer.

It is found in the cytoplasm. The catalysed reaction is tRNA(His) + L-histidine + ATP = L-histidyl-tRNA(His) + AMP + diphosphate + H(+). In Lactobacillus helveticus (strain DPC 4571), this protein is Histidine--tRNA ligase.